The chain runs to 401 residues: Ascaroside receptor GPR3 (401 aa).

At 1 to 16 (MQPFGDAWSQRHLAGV) the chain is on the extracellular side. A helical membrane pass occupies residues 17–37 (VLAGSVLSIVGSLYMILGFFF). Over 38–47 (LRECRSFRHK) the chain is Cytoplasmic. The chain crosses the membrane as a helical span at residues 48–68 (LILGLAVSDLLLALNFFIPSL). Topologically, residues 69 to 93 (SMVTGREISSPWNEGFCSANGFLMQ) are extracellular. Residues C85 and C159 are joined by a disulfide bond. Residues 94–114 (LFFAQIDVWQISIALITLLML) form a helical membrane-spanning segment. The Cytoplasmic segment spans residues 115-128 (SGPSMVLKWIRENV). The chain crosses the membrane as a helical span at residues 129 to 149 (WAVWLFPWLVSLIAAFFAFGF). At 150–175 (WDYANVGGFCWLGSRNIRLYFNYIPR) the chain is on the extracellular side. The helical transmembrane segment at 176–196 (WIIILVCLVIYIAVYRLILHA) threads the bilayer. Residues 197–294 (RRRANIQKTY…QKQVRKIAIQ (98 aa)) lie on the Cytoplasmic side of the membrane. Positions 206–259 (YRGRASDRAPPQPVTTTAPATNPESEKVNPDEISSGNGSSSLDTSRSGSSTGFT) are disordered. Residues 239–257 (SSGNGSSSLDTSRSGSSTG) show a composition bias toward low complexity. Residues 295-315 (MISYPLAYAVLWAIPTIVMII) traverse the membrane as a helical segment. Residues 316–321 (QVARGG) lie on the Extracellular side of the membrane. A helical membrane pass occupies residues 322–342 (EGVSIHVEGLAKMLLVFNGFV). The Cytoplasmic segment spans residues 343-401 (DAHVYGFNERTAMGWRQRIRPAAQEDDEEAAGTSGGVHEVVSRPEPTLKNPNVWQQNMV). The segment at 362–401 (RPAAQEDDEEAAGTSGGVHEVVSRPEPTLKNPNVWQQNMV) is disordered. A compositionally biased stretch (polar residues) spans 391–401 (KNPNVWQQNMV).

The protein belongs to the G-protein coupled receptor 1 family. In terms of assembly, interacts with ascaroside receptor GPR2; may form a functional heterodimer. Interacts with guanine nucleotide-binding protein alpha GPA2; to activate adenylate cyclase and positively regulate nematode trap formation.

The protein resides in the cell membrane. Its function is as follows. G protein-coupled receptor that senses nematode ascaroside pheromones and signals via adenylate cyclase to positively regulate trap formation for nematode capture. The sequence is that of Ascaroside receptor GPR3 from Arthrobotrys oligospora (strain ATCC 24927 / CBS 115.81 / DSM 1491) (Nematode-trapping fungus).